Reading from the N-terminus, the 469-residue chain is MTTSVRTRFAPSPTGFIHLGNIRSALYPWAFARKMKGTFVLRIEDTDVERSTSESVDAILEGMAWLGLDFDEGPFYQMQRMDRYREVLKQMQDEGLVYLCYMSTEELDALRERQREAGEKPRYDGTWRPEPGKVLPEPPAGVQPVLRFRNPLNGVVAWDDAVKGRIEISNEELDDLVIARPDGTPTYNFCVVVDDLDMRITHVIRGDDHVNNTPRQINILRALGGEPPVYAHLPTVLNEQGEKMSKRHGAMSVMGYRDAGYLPEAVVNYLARLGWSHGDAEIFSREQFVEWFDLEHLGKSPAQYDHDKLNWLNAHYIKEAGNVRLAELARPFFAGLGIDEAMLAQGADLTAVVGLLKDRASTVKEIAENAAMFYRAPAPDAESLTQHVTDAVRPALADLAAALKAVEWTREAIAAALKATLGAHKLKMPQLAMPVRLLVAGTTHTPSIDSVLMLFGRDVVVSRIEKALA.

The short motif at 11-21 (PSPTGFIHLGN) is the 'HIGH' region element. Residues 114–131 (QREAGEKPRYDGTWRPEP) show a composition bias toward basic and acidic residues. The segment at 114–139 (QREAGEKPRYDGTWRPEPGKVLPEPP) is disordered. The short motif at 243–247 (KMSKR) is the 'KMSKS' region element. Position 246 (K246) interacts with ATP.

Belongs to the class-I aminoacyl-tRNA synthetase family. Glutamate--tRNA ligase type 1 subfamily. As to quaternary structure, monomer.

The protein resides in the cytoplasm. It catalyses the reaction tRNA(Glu) + L-glutamate + ATP = L-glutamyl-tRNA(Glu) + AMP + diphosphate. Catalyzes the attachment of glutamate to tRNA(Glu) in a two-step reaction: glutamate is first activated by ATP to form Glu-AMP and then transferred to the acceptor end of tRNA(Glu). In Paraburkholderia xenovorans (strain LB400), this protein is Glutamate--tRNA ligase.